We begin with the raw amino-acid sequence, 491 residues long: Chromosomal replication initiator protein DnaA (491 aa).

Residues 1–86 (MTDELNSQFT…VEALSRRLGE (86 aa)) are domain I, interacts with DnaA modulators. Residues 86–150 (ENVELGVRIA…GADKAETPDT (65 aa)) are domain II. Residues 151–367 (SLNARYTFES…GALIRVTAFA (217 aa)) form a domain III, AAA+ region region. Residues Gly-195, Gly-197, Lys-198, and Thr-199 each contribute to the ATP site. The tract at residues 368-491 (SLNKSPIELS…TARIRQRSRH (124 aa)) is domain IV, binds dsDNA.

It belongs to the DnaA family. Oligomerizes as a right-handed, spiral filament on DNA at oriC.

It localises to the cytoplasm. In terms of biological role, plays an essential role in the initiation and regulation of chromosomal replication. ATP-DnaA binds to the origin of replication (oriC) to initiate formation of the DNA replication initiation complex once per cell cycle. Binds the DnaA box (a 9 base pair repeat at the origin) and separates the double-stranded (ds)DNA. Forms a right-handed helical filament on oriC DNA; dsDNA binds to the exterior of the filament while single-stranded (ss)DNA is stabiized in the filament's interior. The ATP-DnaA-oriC complex binds and stabilizes one strand of the AT-rich DNA unwinding element (DUE), permitting loading of DNA polymerase. After initiation quickly degrades to an ADP-DnaA complex that is not apt for DNA replication. Binds acidic phospholipids. The protein is Chromosomal replication initiator protein DnaA of Mycobacteroides abscessus (strain ATCC 19977 / DSM 44196 / CCUG 20993 / CIP 104536 / JCM 13569 / NCTC 13031 / TMC 1543 / L948) (Mycobacterium abscessus).